We begin with the raw amino-acid sequence, 175 residues long: Ribosome maturation factor RimM (175 aa).

A PRC barrel domain is found at glutamate 100–tryptophan 174.

The protein belongs to the RimM family. Binds ribosomal protein uS19.

The protein localises to the cytoplasm. Its function is as follows. An accessory protein needed during the final step in the assembly of 30S ribosomal subunit, possibly for assembly of the head region. Essential for efficient processing of 16S rRNA. May be needed both before and after RbfA during the maturation of 16S rRNA. It has affinity for free ribosomal 30S subunits but not for 70S ribosomes. This is Ribosome maturation factor RimM from Buchnera aphidicola subsp. Schizaphis graminum (strain Sg).